The following is a 79-amino-acid chain: UPF0401 protein YkfF (79 aa).

The protein belongs to the UPF0401 family.

This chain is UPF0401 protein YkfF (ykfF), found in Escherichia coli (strain K12).